A 287-amino-acid chain; its full sequence is Nucleoside kinase (287 aa).

Substrate contacts are provided by D13, N28, G38, and N42. Position 102 (Q102) interacts with ATP. Substrate-binding residues include S104 and Q150. ATP contacts are provided by residues N173 and 196-201; that span reads TNGERG. Position 227 (D227) interacts with substrate. Catalysis depends on D227, which acts as the Proton acceptor.

Belongs to the carbohydrate kinase PfkB family. As to quaternary structure, homodimer. Mg(2+) is required as a cofactor. Requires Co(2+) as cofactor.

The enzyme catalyses adenosine + ATP = AMP + ADP + H(+). It carries out the reaction cytidine + ATP = CMP + ADP + H(+). The catalysed reaction is guanosine + ATP = GMP + ADP + H(+). It catalyses the reaction inosine + ATP = IMP + ADP + H(+). Functionally, nucleoside kinase with broad substrate specificity. Catalyzes the phosphorylation of a variety of nucleosides to the corresponding nucleoside 5'-mono-phosphate in the presence of phosphate donors and divalent cations. Displays the most efficient activity with guanosine, followed by inosine, cytidine, and adenosine. Negligible enzymatic activity is detected with thymidine, uridine, and 2-deoxyadenosine. ATP is the most efficient phosphate donor, but can also use GTP and ITP. Shows no sugar kinase activity, since it is unable to phosphorylate ribose, fructose-1-phosphate, or fructose-6-phosphate. The sequence is that of Nucleoside kinase from Thermoplasma acidophilum (strain ATCC 25905 / DSM 1728 / JCM 9062 / NBRC 15155 / AMRC-C165).